The following is an 85-amino-acid chain: Conotoxin Im28.1 (85 aa).

The N-terminal stretch at 1 to 21 is a signal peptide; the sequence is MPKLEMMLLVLLILPLCYIDA. Residues 22–40 constitute a propeptide that is removed on maturation; it reads VGPPPPWNMEDEIIEHWQK.

This sequence belongs to the conotoxin D superfamily. Contains 5 disulfide bonds. As to expression, expressed by the venom duct.

The protein resides in the secreted. In terms of biological role, probable neurotoxin. The chain is Conotoxin Im28.1 from Conus imperialis (Imperial cone).